The following is a 117-amino-acid chain: Hydrogenase maturation factor HypA (117 aa).

Residue His2 coordinates Ni(2+). Zn(2+)-binding residues include Cys73, Cys76, Cys89, and Cys92.

The protein belongs to the HypA/HybF family.

In terms of biological role, involved in the maturation of [NiFe] hydrogenases. Required for nickel insertion into the metal center of the hydrogenase. The polypeptide is Hydrogenase maturation factor HypA (Pelodictyon phaeoclathratiforme (strain DSM 5477 / BU-1)).